Reading from the N-terminus, the 393-residue chain is Phosphopentomutase (393 aa).

Mn(2+) contacts are provided by aspartate 14, aspartate 287, histidine 292, aspartate 328, histidine 329, and histidine 340.

This sequence belongs to the phosphopentomutase family. The cofactor is Mn(2+).

The protein resides in the cytoplasm. The catalysed reaction is 2-deoxy-alpha-D-ribose 1-phosphate = 2-deoxy-D-ribose 5-phosphate. The enzyme catalyses alpha-D-ribose 1-phosphate = D-ribose 5-phosphate. The protein operates within carbohydrate degradation; 2-deoxy-D-ribose 1-phosphate degradation; D-glyceraldehyde 3-phosphate and acetaldehyde from 2-deoxy-alpha-D-ribose 1-phosphate: step 1/2. Isomerase that catalyzes the conversion of deoxy-ribose 1-phosphate (dRib-1-P) and ribose 1-phosphate (Rib-1-P) to deoxy-ribose 5-phosphate (dRib-5-P) and ribose 5-phosphate (Rib-5-P), respectively. This Geobacillus stearothermophilus (Bacillus stearothermophilus) protein is Phosphopentomutase.